Reading from the N-terminus, the 463-residue chain is Kynureninase 2 (463 aa).

Pyridoxal 5'-phosphate-binding positions include Leu134, Thr135, 162 to 165 (FPSD), Asp247, His250, and Tyr272. Lys273 is modified (N6-(pyridoxal phosphate)lysine). Trp312 and Asn340 together coordinate pyridoxal 5'-phosphate.

The protein belongs to the kynureninase family. Homodimer. The cofactor is pyridoxal 5'-phosphate.

It localises to the cytoplasm. It carries out the reaction L-kynurenine + H2O = anthranilate + L-alanine + H(+). The enzyme catalyses 3-hydroxy-L-kynurenine + H2O = 3-hydroxyanthranilate + L-alanine + H(+). Its pathway is amino-acid degradation; L-kynurenine degradation; L-alanine and anthranilate from L-kynurenine: step 1/1. It functions in the pathway cofactor biosynthesis; NAD(+) biosynthesis; quinolinate from L-kynurenine: step 2/3. Its function is as follows. Catalyzes the cleavage of L-kynurenine (L-Kyn) and L-3-hydroxykynurenine (L-3OHKyn) into anthranilic acid (AA) and 3-hydroxyanthranilic acid (3-OHAA), respectively. This is Kynureninase 2 (bna5-2) from Aspergillus niger (strain ATCC MYA-4892 / CBS 513.88 / FGSC A1513).